A 157-amino-acid chain; its full sequence is 2-C-methyl-D-erythritol 2,4-cyclodiphosphate synthase (157 aa).

A divalent metal cation is bound by residues Asp-8 and His-10. Residues 8–10 (DVH) and 34–35 (HS) contribute to the 4-CDP-2-C-methyl-D-erythritol 2-phosphate site. A divalent metal cation is bound at residue His-42. Residues 56–58 (DIG), 61–65 (FPDTD), 100–106 (AQKPKMA), 132–135 (TTTE), and Phe-139 each bind 4-CDP-2-C-methyl-D-erythritol 2-phosphate.

The protein belongs to the IspF family. In terms of assembly, homotrimer. Requires a divalent metal cation as cofactor.

The catalysed reaction is 4-CDP-2-C-methyl-D-erythritol 2-phosphate = 2-C-methyl-D-erythritol 2,4-cyclic diphosphate + CMP. Its pathway is isoprenoid biosynthesis; isopentenyl diphosphate biosynthesis via DXP pathway; isopentenyl diphosphate from 1-deoxy-D-xylulose 5-phosphate: step 4/6. In terms of biological role, involved in the biosynthesis of isopentenyl diphosphate (IPP) and dimethylallyl diphosphate (DMAPP), two major building blocks of isoprenoid compounds. Catalyzes the conversion of 4-diphosphocytidyl-2-C-methyl-D-erythritol 2-phosphate (CDP-ME2P) to 2-C-methyl-D-erythritol 2,4-cyclodiphosphate (ME-CPP) with a corresponding release of cytidine 5-monophosphate (CMP). This Alkaliphilus oremlandii (strain OhILAs) (Clostridium oremlandii (strain OhILAs)) protein is 2-C-methyl-D-erythritol 2,4-cyclodiphosphate synthase.